Here is a 598-residue protein sequence, read N- to C-terminus: Elongation factor 4 (598 aa).

Positions 2-184 (KNIRNFSIIA…EIVRCIPPPV (183 aa)) constitute a tr-type G domain. GTP is bound by residues 14–19 (DHGKST) and 131–134 (NKID).

It belongs to the TRAFAC class translation factor GTPase superfamily. Classic translation factor GTPase family. LepA subfamily.

The protein localises to the cell inner membrane. The catalysed reaction is GTP + H2O = GDP + phosphate + H(+). Its function is as follows. Required for accurate and efficient protein synthesis under certain stress conditions. May act as a fidelity factor of the translation reaction, by catalyzing a one-codon backward translocation of tRNAs on improperly translocated ribosomes. Back-translocation proceeds from a post-translocation (POST) complex to a pre-translocation (PRE) complex, thus giving elongation factor G a second chance to translocate the tRNAs correctly. Binds to ribosomes in a GTP-dependent manner. This chain is Elongation factor 4, found in Psychromonas ingrahamii (strain DSM 17664 / CCUG 51855 / 37).